Consider the following 170-residue polypeptide: Ribosome maturation factor RimM (170 aa).

Positions proline 98–phenylalanine 170 constitute a PRC barrel domain.

Belongs to the RimM family. Binds ribosomal protein uS19.

Its subcellular location is the cytoplasm. Its function is as follows. An accessory protein needed during the final step in the assembly of 30S ribosomal subunit, possibly for assembly of the head region. Essential for efficient processing of 16S rRNA. May be needed both before and after RbfA during the maturation of 16S rRNA. It has affinity for free ribosomal 30S subunits but not for 70S ribosomes. The protein is Ribosome maturation factor RimM of Xanthomonas campestris pv. campestris (strain 8004).